A 200-amino-acid polypeptide reads, in one-letter code: Imidazole glycerol phosphate synthase subunit HisH (200 aa).

A Glutamine amidotransferase type-1 domain is found at 3 to 200 (EVALIDAGGA…LRNFLEMDAA (198 aa)). Catalysis depends on Cys-78, which acts as the Nucleophile. Residues His-179 and Glu-181 contribute to the active site.

Heterodimer of HisH and HisF.

It localises to the cytoplasm. The enzyme catalyses 5-[(5-phospho-1-deoxy-D-ribulos-1-ylimino)methylamino]-1-(5-phospho-beta-D-ribosyl)imidazole-4-carboxamide + L-glutamine = D-erythro-1-(imidazol-4-yl)glycerol 3-phosphate + 5-amino-1-(5-phospho-beta-D-ribosyl)imidazole-4-carboxamide + L-glutamate + H(+). It carries out the reaction L-glutamine + H2O = L-glutamate + NH4(+). It functions in the pathway amino-acid biosynthesis; L-histidine biosynthesis; L-histidine from 5-phospho-alpha-D-ribose 1-diphosphate: step 5/9. In terms of biological role, IGPS catalyzes the conversion of PRFAR and glutamine to IGP, AICAR and glutamate. The HisH subunit catalyzes the hydrolysis of glutamine to glutamate and ammonia as part of the synthesis of IGP and AICAR. The resulting ammonia molecule is channeled to the active site of HisF. The polypeptide is Imidazole glycerol phosphate synthase subunit HisH (Xylella fastidiosa (strain Temecula1 / ATCC 700964)).